A 262-amino-acid polypeptide reads, in one-letter code: Ribosomal RNA small subunit methyltransferase A (262 aa).

S-adenosyl-L-methionine is bound by residues N13, L15, G40, E61, D85, and N104.

The protein belongs to the class I-like SAM-binding methyltransferase superfamily. rRNA adenine N(6)-methyltransferase family. RsmA subfamily.

It is found in the cytoplasm. It carries out the reaction adenosine(1518)/adenosine(1519) in 16S rRNA + 4 S-adenosyl-L-methionine = N(6)-dimethyladenosine(1518)/N(6)-dimethyladenosine(1519) in 16S rRNA + 4 S-adenosyl-L-homocysteine + 4 H(+). Functionally, specifically dimethylates two adjacent adenosines (A1518 and A1519) in the loop of a conserved hairpin near the 3'-end of 16S rRNA in the 30S particle. May play a critical role in biogenesis of 30S subunits. The chain is Ribosomal RNA small subunit methyltransferase A from Chromobacterium violaceum (strain ATCC 12472 / DSM 30191 / JCM 1249 / CCUG 213 / NBRC 12614 / NCIMB 9131 / NCTC 9757 / MK).